The sequence spans 286 residues: Nucleotide-binding protein VC0395_A2112/VC395_2645 (286 aa).

Residue glycine 8–serine 15 coordinates ATP. Aspartate 56–asparagine 59 is a GTP binding site.

This sequence belongs to the RapZ-like family.

Functionally, displays ATPase and GTPase activities. The protein is Nucleotide-binding protein VC0395_A2112/VC395_2645 of Vibrio cholerae serotype O1 (strain ATCC 39541 / Classical Ogawa 395 / O395).